We begin with the raw amino-acid sequence, 436 residues long: UDP-N-acetylmuramate--L-alanine ligase (436 aa).

Residue 110-116 coordinates ATP; the sequence is GAHGKTS.

This sequence belongs to the MurCDEF family.

The protein resides in the cytoplasm. The enzyme catalyses UDP-N-acetyl-alpha-D-muramate + L-alanine + ATP = UDP-N-acetyl-alpha-D-muramoyl-L-alanine + ADP + phosphate + H(+). It participates in cell wall biogenesis; peptidoglycan biosynthesis. Cell wall formation. The chain is UDP-N-acetylmuramate--L-alanine ligase from Lacticaseibacillus paracasei (strain ATCC 334 / BCRC 17002 / CCUG 31169 / CIP 107868 / KCTC 3260 / NRRL B-441) (Lactobacillus paracasei).